Here is a 68-residue protein sequence, read N- to C-terminus: DNA-directed RNA polymerase subunit omega (68 aa).

Belongs to the RNA polymerase subunit omega family. In terms of assembly, the RNAP catalytic core consists of 2 alpha, 1 beta, 1 beta' and 1 omega subunit. When a sigma factor is associated with the core the holoenzyme is formed, which can initiate transcription.

The enzyme catalyses RNA(n) + a ribonucleoside 5'-triphosphate = RNA(n+1) + diphosphate. In terms of biological role, promotes RNA polymerase assembly. Latches the N- and C-terminal regions of the beta' subunit thereby facilitating its interaction with the beta and alpha subunits. The protein is DNA-directed RNA polymerase subunit omega of Citrifermentans bemidjiense (strain ATCC BAA-1014 / DSM 16622 / JCM 12645 / Bem) (Geobacter bemidjiensis).